The primary structure comprises 351 residues: uncharacterized protein (351 aa).

The disordered stretch occupies residues 1-61 (MNDKRKPSFQ…RDKQEVKETR (61 aa)). Composition is skewed to basic and acidic residues over residues 16–38 (FQER…HFND) and 44–61 (RNEK…KETR).

Belongs to the class IV-like SAM-binding methyltransferase superfamily. RNA methyltransferase TrmH family.

This is an uncharacterized protein from Haemophilus influenzae (strain ATCC 51907 / DSM 11121 / KW20 / Rd).